Consider the following 734-residue polypeptide: MALRFPRFSQGLAQDPTTRRIWFGIATAHDFESHDDITEERLYQNIFASHFGQLAIIFLWTSGNLFHVAWQGNFEAWVQDPLHVRPIAHAIWDPHFGQPAVEAFTRGGALGPVNIAYSGVYQWWYTIGLRTNEDLYTGALFLLFLSAISLIAGWLHLQPKWKPSVSWFKNAESRLNHHLSGLFGVSSLAWTGHLVHVAIPASRGEYVRWNNFLDVLPHPRGLGPLFTGQWNLYAQNPDSNSHFFGTSQGSGTAILTLLGGFHPQTQSLWLTDIAHHHLAIAFLFLVAGHMYRTNFGIGHSIKDLLEAHIPPGGRLGRGHKGLYDTINNSIHFQLGLALASLGVITSLVAQHMYSLPAYAFIAQDFTTQAALYTHHQYIAGFIMTGAFAHGAIFFIRDYNPEQNEDNVLARMLDHKEAIISHLSWVSLFLGFHTLGLYVHNDVMLAFGTPEKQILIEPIFAQWIQSAHGKTSYGFDVLLSSTNSPAFIAGRSIWLPGWLNAINENSNSLFLKIGPGDFLVHHAIALGLHTTTLILVKGALDARGSKLMPDKKDFGYSFPCDGPGRGGTCDISAWDAFYLAVFWMLNTIGWVTFYWHWKHITLWQGNVSQFNESSTYLMGWLRDYLWLNSSQLINGYNPFGMNSLSVWAWMFLFGHLVWATGFMFLISWRGYWQELIETLAWAHERTPLANLIRWRDKPVALSIVQARLVGLAHFSVGYIFTYAAFLIASTSGKFG.

Transmembrane regions (helical) follow at residues 46 to 69 (IFASHFGQLAIIFLWTSGNLFHVA), 135 to 158 (LYTGALFLLFLSAISLIAGWLHLQ), 175 to 199 (LNHHLSGLFGVSSLAWTGHLVHVAI), 273 to 291 (IAHHHLAIAFLFLVAGHMY), 330 to 353 (IHFQLGLALASLGVITSLVAQHMY), 369 to 395 (AALYTHHQYIAGFIMTGAFAHGAIFFI), 417 to 439 (AIISHLSWVSLFLGFHTLGLYVH), and 517 to 535 (FLVHHAIALGLHTTTLILV). [4Fe-4S] cluster is bound by residues cysteine 559 and cysteine 568. A run of 2 helical transmembrane segments spans residues 575-596 (AFYLAVFWMLNTIGWVTFYWHW) and 643-665 (LSVWAWMFLFGHLVWATGFMFLI). 3 residues coordinate chlorophyll a: histidine 654, methionine 662, and tyrosine 670. Residue tryptophan 671 coordinates phylloquinone. A helical transmembrane segment spans residues 707 to 727 (LVGLAHFSVGYIFTYAAFLIA).

It belongs to the PsaA/PsaB family. As to quaternary structure, the PsaA/B heterodimer binds the P700 chlorophyll special pair and subsequent electron acceptors. PSI consists of a core antenna complex that captures photons, and an electron transfer chain that converts photonic excitation into a charge separation. The eukaryotic PSI reaction center is composed of at least 11 subunits. It depends on P700 is a chlorophyll a/chlorophyll a' dimer, A0 is one or more chlorophyll a, A1 is one or both phylloquinones and FX is a shared 4Fe-4S iron-sulfur center. as a cofactor.

The protein resides in the plastid. The protein localises to the chloroplast thylakoid membrane. It carries out the reaction reduced [plastocyanin] + hnu + oxidized [2Fe-2S]-[ferredoxin] = oxidized [plastocyanin] + reduced [2Fe-2S]-[ferredoxin]. Its function is as follows. PsaA and PsaB bind P700, the primary electron donor of photosystem I (PSI), as well as the electron acceptors A0, A1 and FX. PSI is a plastocyanin-ferredoxin oxidoreductase, converting photonic excitation into a charge separation, which transfers an electron from the donor P700 chlorophyll pair to the spectroscopically characterized acceptors A0, A1, FX, FA and FB in turn. Oxidized P700 is reduced on the lumenal side of the thylakoid membrane by plastocyanin. The protein is Photosystem I P700 chlorophyll a apoprotein A2 of Pelargonium hortorum (Common geranium).